Consider the following 377-residue polypeptide: Serine/threonine-protein phosphatase PP2A-2 catalytic subunit (377 aa).

The tract at residues 1 to 66 is disordered; sequence MDMEIDDPMH…SGIADHKSSK (66 aa). Over residues 28 to 40 the composition is skewed to basic and acidic residues; the sequence is DDGKNNTKARSND. At Ser38 the chain carries Phosphoserine. At Thr43 the chain carries Phosphothreonine. Asp125, His127, Asp153, and Asn185 together coordinate Mn(2+). His186 acts as the Proton donor in catalysis. His235 and His309 together coordinate Mn(2+). At Leu377 the chain carries Leucine methyl ester.

This sequence belongs to the PPP phosphatase family. PP-2A subfamily. In terms of assembly, inactivated in a complex with phosphatase methylesterase PPE1 (PP2Ai). Interacts with phosphatase 2A activator RRD2, which can reactivate PP2Ai by dissociating the catalytic subunit from the complex. Interacts with TAP42. Mn(2+) is required as a cofactor. Reversibly methyl esterified on Leu-377 by leucine carboxyl methyltransferase 1 (PPM1) and protein phosphatase methylesterase 1 (PPE1). Carboxyl methylation influences the affinity of the catalytic subunit for the different regulatory subunits, thereby modulating the PP2A holoenzyme's substrate specificity, enzyme activity and cellular localization.

The catalysed reaction is O-phospho-L-seryl-[protein] + H2O = L-seryl-[protein] + phosphate. The enzyme catalyses O-phospho-L-threonyl-[protein] + H2O = L-threonyl-[protein] + phosphate. Its function is as follows. Exact function not known, phosphatase 2A performs an essential cellular function. In Saccharomyces cerevisiae (strain ATCC 204508 / S288c) (Baker's yeast), this protein is Serine/threonine-protein phosphatase PP2A-2 catalytic subunit (PPH22).